Here is a 448-residue protein sequence, read N- to C-terminus: UDP-N-acetylmuramate--L-alanine ligase (448 aa).

118–124 (GTHGKTT) serves as a coordination point for ATP.

It belongs to the MurCDEF family.

The protein resides in the cytoplasm. The catalysed reaction is UDP-N-acetyl-alpha-D-muramate + L-alanine + ATP = UDP-N-acetyl-alpha-D-muramoyl-L-alanine + ADP + phosphate + H(+). Its pathway is cell wall biogenesis; peptidoglycan biosynthesis. Its function is as follows. Cell wall formation. In Flavobacterium psychrophilum (strain ATCC 49511 / DSM 21280 / CIP 103535 / JIP02/86), this protein is UDP-N-acetylmuramate--L-alanine ligase.